Here is a 143-residue protein sequence, read N- to C-terminus: MKFGIVVSEWNANITGALLDGAVKTLKKHGAKEENILVKTVPGSFELTFGANQMMENSDIDAIIIIGCVIKGDTPHFDYVCMGVTQGVAQLNATGDIPVIYGLITTNTMEQAEDRAGGKLGNKGDECAITAIKMIDFVWSLNK.

Residues Trp-10, 44–46 (SFE), and 68–70 (CVI) each bind 5-amino-6-(D-ribitylamino)uracil. 73–74 (DT) contributes to the (2S)-2-hydroxy-3-oxobutyl phosphate binding site. His-76 serves as the catalytic Proton donor. Tyr-101 provides a ligand contact to 5-amino-6-(D-ribitylamino)uracil. Residue Arg-115 participates in (2S)-2-hydroxy-3-oxobutyl phosphate binding.

It belongs to the DMRL synthase family.

The enzyme catalyses (2S)-2-hydroxy-3-oxobutyl phosphate + 5-amino-6-(D-ribitylamino)uracil = 6,7-dimethyl-8-(1-D-ribityl)lumazine + phosphate + 2 H2O + H(+). It participates in cofactor biosynthesis; riboflavin biosynthesis; riboflavin from 2-hydroxy-3-oxobutyl phosphate and 5-amino-6-(D-ribitylamino)uracil: step 1/2. Its function is as follows. Catalyzes the formation of 6,7-dimethyl-8-ribityllumazine by condensation of 5-amino-6-(D-ribitylamino)uracil with 3,4-dihydroxy-2-butanone 4-phosphate. This is the penultimate step in the biosynthesis of riboflavin. In Bacteroides fragilis (strain YCH46), this protein is 6,7-dimethyl-8-ribityllumazine synthase.